The primary structure comprises 593 residues: Aspartate--tRNA ligase (593 aa).

Glu180 provides a ligand contact to L-aspartate. The aspartate stretch occupies residues 204-207 (QIFK). An L-aspartate-binding site is contributed by Arg226. ATP is bound by residues 226-228 (RDE) and Gln235. His453 is an L-aspartate binding site. Glu487 serves as a coordination point for ATP. Arg494 is an L-aspartate binding site. 539-542 (GLDR) is an ATP binding site.

It belongs to the class-II aminoacyl-tRNA synthetase family. Type 1 subfamily. Homodimer.

It is found in the cytoplasm. The catalysed reaction is tRNA(Asp) + L-aspartate + ATP = L-aspartyl-tRNA(Asp) + AMP + diphosphate. In terms of biological role, catalyzes the attachment of L-aspartate to tRNA(Asp) in a two-step reaction: L-aspartate is first activated by ATP to form Asp-AMP and then transferred to the acceptor end of tRNA(Asp). The protein is Aspartate--tRNA ligase of Clostridium botulinum (strain ATCC 19397 / Type A).